The primary structure comprises 319 residues: tRNA U34 carboxymethyltransferase (319 aa).

Residues Lys88, Trp102, Lys107, Gly126, 176–177 (LE), Met192, Tyr196, and Arg311 each bind carboxy-S-adenosyl-L-methionine.

The protein belongs to the class I-like SAM-binding methyltransferase superfamily. CmoB family. In terms of assembly, homotetramer.

It carries out the reaction carboxy-S-adenosyl-L-methionine + 5-hydroxyuridine(34) in tRNA = 5-carboxymethoxyuridine(34) in tRNA + S-adenosyl-L-homocysteine + H(+). Functionally, catalyzes carboxymethyl transfer from carboxy-S-adenosyl-L-methionine (Cx-SAM) to 5-hydroxyuridine (ho5U) to form 5-carboxymethoxyuridine (cmo5U) at position 34 in tRNAs. This is tRNA U34 carboxymethyltransferase from Pseudomonas syringae pv. tomato (strain ATCC BAA-871 / DC3000).